A 224-amino-acid chain; its full sequence is N-terminal Xaa-Pro-Lys N-methyltransferase 1 (224 aa).

S-adenosyl-L-methionine contacts are provided by residues glycine 70, arginine 75, 92–94, 120–121, and glutamine 136; these read DVT and LQ.

The protein belongs to the methyltransferase superfamily. NTM1 family.

The protein resides in the nucleus. It catalyses the reaction N-terminal L-alanyl-L-prolyl-L-lysyl-[protein] + 3 S-adenosyl-L-methionine = N-terminal N,N,N-trimethyl-L-alanyl-L-prolyl-L-lysyl-[protein] + 3 S-adenosyl-L-homocysteine + 3 H(+). It carries out the reaction N-terminal L-seryl-L-prolyl-L-lysyl-[protein] + 3 S-adenosyl-L-methionine = N-terminal N,N,N-trimethyl-L-seryl-L-prolyl-L-lysyl-[protein] + 3 S-adenosyl-L-homocysteine + 3 H(+). The catalysed reaction is N-terminal L-prolyl-L-prolyl-L-lysyl-[protein] + 2 S-adenosyl-L-methionine = N-terminal N,N-dimethyl-L-prolyl-L-prolyl-L-lysyl-[protein] + 2 S-adenosyl-L-homocysteine + 2 H(+). Distributive alpha-N-methyltransferase that methylates the N-terminus of target proteins containing the N-terminal motif [Ala/Gly/Pro/Ser]-Pro-Lys when the initiator Met is cleaved. Specifically catalyzes mono-, di- or tri-methylation of the exposed alpha-amino group of the Ala, Gly or Ser residue in the [Ala/Gly/Ser]-Pro-Lys motif and mono- or di-methylation of Pro in the Pro-Pro-Lys motif. Required during mitosis for normal bipolar spindle formation and chromosome segregation via its action on target proteins. This chain is N-terminal Xaa-Pro-Lys N-methyltransferase 1 (ntmt1), found in Xenopus tropicalis (Western clawed frog).